The following is a 281-amino-acid chain: Peptidyl-prolyl cis-trans isomerase CYP28, chloroplastic (281 aa).

The transit peptide at 1–24 (MASSSILIPPILTRRNLLLSTTIA) directs the protein to the chloroplast. The PPIase cyclophilin-type domain occupies 66–268 (STTPCSDSTP…KTVFISGCGE (203 aa)).

This sequence belongs to the cyclophilin-type PPIase family. In terms of processing, S-nytrosylated during the hypersensitive disease resistance response. Ubiquitous. Not detected in roots.

It is found in the plastid. It localises to the chloroplast. It carries out the reaction [protein]-peptidylproline (omega=180) = [protein]-peptidylproline (omega=0). PPIases accelerate the folding of proteins. It catalyzes the cis-trans isomerization of proline imidic peptide bonds in oligopeptides. The sequence is that of Peptidyl-prolyl cis-trans isomerase CYP28, chloroplastic (CYP28) from Arabidopsis thaliana (Mouse-ear cress).